Consider the following 489-residue polypeptide: Cytochrome P450 monooxygenase orf5 (489 aa).

Residues 13-35 traverse the membrane as a helical segment; the sequence is FVRLLAFHLIGLFVSITVYRLFF. Residues Asn-37, Asn-118, Asn-171, and Asn-345 are each glycosylated (N-linked (GlcNAc...) asparagine). Heme is bound at residue Cys-428.

The protein belongs to the cytochrome P450 family. Requires heme as cofactor.

The protein resides in the membrane. Its pathway is mycotoxin biosynthesis. Its function is as follows. Cytochrome P450 monooxygenase; part of the gene cluster that mediates the biosynthesis of brefeldin A (BFA), a protein transport inhibitor that shows antiviral, antifungal, and antitumor properties. The proposed biosynthesis of BFA involves formation of an acyclic polyketide chain that is differentially tailored throughout the backbone. The highly reducing polyketide synthase Bref-PKS is proposed to synthesize the precisely reduced octaketide precursor, which could then be directly offloaded by the thiohydrolase enzyme Bref-TH followed by a cytochrome P450 monooxygenase-mediated formation of the cyclopentane ring and macrocyclization to afford 7-deoxy BFA. Alternatively, the first ring annulation can also occur on the ACP-tethered intermediate before the thiohydrolase release and lactonization. The C7-hydroxylation by another cytochrome P450 monooxygenase is believed to be the final step in the process to obtain the final structure of BFA. In addition to the HRPKS Bref-PKS and the thiohydrolase Bref-TH, the brefeldin A biosynthesis cluster contains 4 cytochrome p450 monooxygenases (called orf3 to orf6), as well a the probable cluster-specific transcription regulator orf8. This is Cytochrome P450 monooxygenase orf5 from Eupenicillium brefeldianum (Penicillium brefeldianum).